Consider the following 499-residue polypeptide: Pyruvate kinase 1 (499 aa).

Position 50 (Arg-50) interacts with substrate. Positions 52, 54, 84, and 85 each coordinate K(+). 52–55 (NFSH) is a binding site for ATP. Arg-91 is an ATP binding site. Glu-241 contributes to the Mg(2+) binding site. Residues Gly-264, Asp-265, and Thr-297 each coordinate substrate. Asp-265 provides a ligand contact to Mg(2+).

Belongs to the pyruvate kinase family. In terms of assembly, homotetramer. Mg(2+) is required as a cofactor. The cofactor is K(+).

The catalysed reaction is pyruvate + ATP = phosphoenolpyruvate + ADP + H(+). Its pathway is carbohydrate degradation; glycolysis; pyruvate from D-glyceraldehyde 3-phosphate: step 5/5. Its activity is regulated as follows. Activated by fructose 2,6-bisphosphate, activated by the effector in a cooperative manner. This Trypanosoma brucei brucei protein is Pyruvate kinase 1 (PYK1).